Consider the following 115-residue polypeptide: NADH-ubiquinone oxidoreductase chain 3 (115 aa).

The next 3 membrane-spanning stretches (helical) occupy residues Leu-5–Pro-25, Phe-55–Leu-75, and Leu-86–Trp-106.

The protein belongs to the complex I subunit 3 family. Core subunit of respiratory chain NADH dehydrogenase (Complex I) which is composed of 45 different subunits. Interacts with TMEM186. Interacts with TMEM242.

The protein resides in the mitochondrion inner membrane. It catalyses the reaction a ubiquinone + NADH + 5 H(+)(in) = a ubiquinol + NAD(+) + 4 H(+)(out). Its function is as follows. Core subunit of the mitochondrial membrane respiratory chain NADH dehydrogenase (Complex I) which catalyzes electron transfer from NADH through the respiratory chain, using ubiquinone as an electron acceptor. Essential for the catalytic activity of complex I. In Avahi unicolor (Sambirano woolly lemur), this protein is NADH-ubiquinone oxidoreductase chain 3.